Reading from the N-terminus, the 265-residue chain is Pre-mRNA-splicing factor cwf15 (265 aa).

Disordered regions lie at residues 1 to 31 (MTTA…ALPA) and 62 to 197 (AAHF…ALEQ). Residues 113-125 (EADEDASDSDDSV) show a composition bias toward acidic residues. The span at 143-155 (SNSQESVDSSNSE) shows a compositional bias: low complexity. Positions 155-205 (ESSDEESDSEDETQQLLRELENIKQERKREQMLQEEKNRALEQEKREREIA) form a coiled coil. A compositionally biased stretch (acidic residues) spans 156-167 (SSDEESDSEDET). Over residues 172-197 (RELENIKQERKREQMLQEEKNRALEQ) the composition is skewed to basic and acidic residues.

This sequence belongs to the CWC15 family. As to quaternary structure, belongs to the 40S cdc5-associated complex (or cwf complex), a spliceosome sub-complex reminiscent of a late-stage spliceosome composed of the U2, U5 and U6 snRNAs and at least brr2, cdc5, cwf2/prp3, cwf3/syf1, cwf4/syf3, cwf5/ecm2, spp42/cwf6, cwf7/spf27, cwf8, cwf9, cwf10, cwf11, cwf12, prp45/cwf13, cwf14, cwf15, cwf16, cwf17, cwf18, cwf19, cwf20, cwf21, cwf22, cwf23, cwf24, cwf25, cwf26, cyp7/cwf27, cwf28, cwf29/ist3, lea1, msl1, prp5/cwf1, prp10, prp12/sap130, prp17, prp22, sap61, sap62, sap114, sap145, slu7, smb1, smd1, smd3, smf1, smg1 and syf2.

Its subcellular location is the nucleus. In terms of biological role, involved in pre-mRNA splicing. The polypeptide is Pre-mRNA-splicing factor cwf15 (cwf15) (Schizosaccharomyces pombe (strain 972 / ATCC 24843) (Fission yeast)).